The chain runs to 214 residues: Outer-membrane lipoprotein LolB (214 aa).

The first 25 residues, 1 to 25, serve as a signal peptide directing secretion; that stretch reads MNNLKRLTKTIFSCFTLSALLLLAG. The N-palmitoyl cysteine moiety is linked to residue Cys-26. Cys-26 is lipidated: S-diacylglycerol cysteine.

The protein belongs to the LolB family. Monomer.

It is found in the cell outer membrane. Plays a critical role in the incorporation of lipoproteins in the outer membrane after they are released by the LolA protein. This Shewanella baltica (strain OS155 / ATCC BAA-1091) protein is Outer-membrane lipoprotein LolB.